A 235-amino-acid polypeptide reads, in one-letter code: Probable tetraspanin tspB (235 aa).

Residues 1–23 are Cytoplasmic-facing; it reads MVDTTNLIPNTPRYLKVPLIAFN. The helical transmembrane segment at 24–44 threads the bilayer; it reads TILWVLGLVLVIIGSIGVSFF. At 45–68 the chain is on the extracellular side; the sequence is SNFKDFTKVSKASAALSNLTTGAP. The N-linked (GlcNAc...) asparagine glycan is linked to N62. The helical transmembrane segment at 69–89 threads the bilayer; the sequence is AGVLVIGIFFVILTVIGCFVA. At 90-93 the chain is on the cytoplasmic side; sequence GKEK. Residues 94 to 114 traverse the membrane as a helical segment; the sequence is LVGLVIYTMLMLIILVALIGV. Residues 115–200 are Extracellular-facing; the sequence is GGKALTLHND…ISSNLYLVGA (86 aa). Residues N143 and N159 are each glycosylated (N-linked (GlcNAc...) asparagine). The chain crosses the membrane as a helical span at residues 201–221; sequence AAVSIGVIEFICMLFALFLII. Over 222–235 the chain is Cytoplasmic; that stretch reads RICRAPRTKSYDYQ.

This sequence belongs to the tetraspanin (TM4SF) family.

It is found in the membrane. The sequence is that of Probable tetraspanin tspB (tspB) from Dictyostelium discoideum (Social amoeba).